The following is a 150-amino-acid chain: Large ribosomal subunit protein bL9 (150 aa).

This sequence belongs to the bacterial ribosomal protein bL9 family.

Functionally, binds to the 23S rRNA. In Shewanella sediminis (strain HAW-EB3), this protein is Large ribosomal subunit protein bL9.